Reading from the N-terminus, the 243-residue chain is MSETHFGFEKVDESEKAGKVAGVFHSVASKYDVMNDLMSGGMHRLWKVFTIAQANVRPGQKVLDIAGGTGDLAKAFAKQAGPTGEVWLTDINESMLRVGRDRLLNKGVVTPVALCDAERIPFPDNYFDLVTVAFGLRNMTHKDAALAEMRRVIKPGGKVMVLEFSKVWKPLEKFYDVYSFKVLPWLGERVAGDAPSYRYLAESIRMHPDQGSLVRMMEQVGLEQVEYFNLTAGVVALHVGRKY.

S-adenosyl-L-methionine contacts are provided by residues threonine 69, aspartate 90, and 116–117 (DA).

It belongs to the class I-like SAM-binding methyltransferase superfamily. MenG/UbiE family.

The catalysed reaction is a 2-demethylmenaquinol + S-adenosyl-L-methionine = a menaquinol + S-adenosyl-L-homocysteine + H(+). It catalyses the reaction a 2-methoxy-6-(all-trans-polyprenyl)benzene-1,4-diol + S-adenosyl-L-methionine = a 5-methoxy-2-methyl-3-(all-trans-polyprenyl)benzene-1,4-diol + S-adenosyl-L-homocysteine + H(+). The protein operates within quinol/quinone metabolism; menaquinone biosynthesis; menaquinol from 1,4-dihydroxy-2-naphthoate: step 2/2. It participates in cofactor biosynthesis; ubiquinone biosynthesis. Its function is as follows. Methyltransferase required for the conversion of demethylmenaquinol (DMKH2) to menaquinol (MKH2) and the conversion of 2-polyprenyl-6-methoxy-1,4-benzoquinol (DDMQH2) to 2-polyprenyl-3-methyl-6-methoxy-1,4-benzoquinol (DMQH2). This chain is Ubiquinone/menaquinone biosynthesis C-methyltransferase UbiE, found in Cupriavidus metallidurans (strain ATCC 43123 / DSM 2839 / NBRC 102507 / CH34) (Ralstonia metallidurans).